Here is a 307-residue protein sequence, read N- to C-terminus: Salivary glue protein Sgs-3 (307 aa).

The signal sequence occupies residues 1 to 23; that stretch reads MKLTIATALASILLIGSANVANC. The disordered stretch occupies residues 56–257; the sequence is APPTQQSTTQ…PTTTKPTTPK (202 aa).

O-glycosylated by Pgnat9 in salivary glands. Specifically expressed in the salivary gland.

It is found in the secreted. The protein is Salivary glue protein Sgs-3 of Drosophila melanogaster (Fruit fly).